Here is an 81-residue protein sequence, read N- to C-terminus: Gamma-conotoxin-like TeA53 (81 aa).

An N-terminal signal peptide occupies residues 1–19 (MQKLTILLLVAAVLMSTQA). Positions 20 to 42 (LNQEQHQRAKINLLSKRKPPAER) are excised as a propeptide. Disulfide bonds link Cys-49/Cys-63, Cys-56/Cys-67, and Cys-62/Cys-72.

Belongs to the conotoxin O2 superfamily. As to expression, expressed by the venom duct.

Its subcellular location is the secreted. Its function is as follows. Gamma-conotoxins may act on voltage-gated non-specific cation pacemaker channels (HCN). The chain is Gamma-conotoxin-like TeA53 from Conus textile (Cloth-of-gold cone).